Consider the following 245-residue polypeptide: GTP cyclohydrolase 1 type 2 homolog (245 aa).

5 residues coordinate a divalent metal cation: H63, H64, D100, H213, and E217.

The protein belongs to the GTP cyclohydrolase I type 2/NIF3 family. As to quaternary structure, homohexamer.

This Archaeoglobus fulgidus (strain ATCC 49558 / DSM 4304 / JCM 9628 / NBRC 100126 / VC-16) protein is GTP cyclohydrolase 1 type 2 homolog.